Consider the following 1286-residue polypeptide: CLIP-associating protein 2 (1286 aa).

Positions methionine 1–threonine 40 are golgi localization. Serine 14 and serine 20 each carry phosphoserine. The segment at aspartate 17–alanine 70 is disordered. Over residues serine 53 to glycine 69 the composition is skewed to gly residues. The segment at glycine 66–serine 317 is TOG 1. HEAT repeat units follow at residues histidine 179–threonine 214, histidine 215–threonine 251, and arginine 256–glycine 293. 2 disordered regions span residues valine 320 to proline 350 and glycine 355 to serine 374. Phosphoserine occurs at positions 322, 333, and 336. The segment covering serine 322–proline 340 has biased composition (low complexity). A compositionally biased stretch (polar residues) spans phenylalanine 341–proline 350. Phosphoserine is present on residues serine 374, serine 376, and serine 413. A disordered region spans residues serine 410–valine 473. The span at threonine 417–valine 431 shows a compositional bias: basic and acidic residues. An interaction with microtubules, MAPRE1 and MAPRE3 region spans residues arginine 450–serine 565. The segment covering serine 459–valine 473 has biased composition (low complexity). Phosphoserine is present on residues serine 461, serine 465, serine 469, serine 484, and serine 495. A disordered region spans residues asparagine 492–arginine 566. Residues serine 500–proline 503 carry the SXIP motif 1; mediates interaction with MAPRE1 and targeting to microtubule plus ends motif. Serine 513 carries the post-translational modification Phosphoserine. The short motif at serine 523–proline 526 is the SXIP motif 2; mediates interaction with MAPRE1 and targeting to microtubule plus ends element. Serine 531, serine 535, serine 570, serine 572, serine 581, serine 614, and serine 620 each carry phosphoserine. Positions arginine 606 to aspartate 616 are enriched in basic and acidic residues. Positions arginine 606 to isoleucine 638 are disordered. Low complexity predominate over residues serine 620 to arginine 634. The interval methionine 642–asparagine 873 is TOG 2. 2 HEAT repeats span residues lysine 702–alanine 739 and leucine 764–proline 801. Threonine 779 is modified (phosphothreonine). The segment at threonine 864 to serine 1286 is interaction with RSN and localization to the Golgi and kinetochores. Disordered stretches follow at residues histidine 870 to aspartate 920 and serine 944 to leucine 990. Composition is skewed to polar residues over residues arginine 872 to serine 884 and serine 893 to proline 914. Residue serine 884 is modified to Phosphoserine. Serine 944, serine 947, serine 1005, and serine 1021 each carry phosphoserine. Basic and acidic residues predominate over residues serine 947–glycine 964. The required for cortical localization stretch occupies residues arginine 1009–serine 1286. HEAT repeat units follow at residues leucine 1046 to glutamate 1083, glutamate 1090 to alanine 1127, and leucine 1208 to aspartate 1245.

It belongs to the CLASP family. In terms of assembly, interacts with microtubules. Interacts with MAPRE1; probably required for targeting to the growing microtubule plus ends. Interacts with CLIP2, ERC1, MAPRE3, PHLDB2 and RSN. The interaction with ERC1 may be mediated by PHLDB2. Interacts with GCC2; recruits CLASP2 to Golgi membranes. Interacts with MACF1. Interacts with SOGA1 and MTCL1. In terms of processing, phosphorylated by GSK3B. Phosphorylation by GSK3B may negatively regulate binding to microtubule lattices in lamella.

It is found in the cytoplasm. Its subcellular location is the cytoskeleton. The protein resides in the microtubule organizing center. The protein localises to the centrosome. It localises to the chromosome. It is found in the centromere. Its subcellular location is the kinetochore. The protein resides in the spindle. The protein localises to the golgi apparatus. It localises to the trans-Golgi network. It is found in the cell membrane. Its subcellular location is the cell projection. The protein resides in the ruffle membrane. The protein localises to the cell cortex. In terms of biological role, microtubule plus-end tracking protein that promotes the stabilization of dynamic microtubules. Involved in the nucleation of noncentrosomal microtubules originating from the trans-Golgi network (TGN). Required for the polarization of the cytoplasmic microtubule arrays in migrating cells towards the leading edge of the cell. May act at the cell cortex to enhance the frequency of rescue of depolymerizing microtubules by attaching their plus-ends to cortical platforms composed of ERC1 and PHLDB2. This cortical microtubule stabilizing activity is regulated at least in part by phosphatidylinositol 3-kinase signaling. Also performs a similar stabilizing function at the kinetochore which is essential for the bipolar alignment of chromosomes on the mitotic spindle. Acts as a mediator of ERBB2-dependent stabilization of microtubules at the cell cortex. This chain is CLIP-associating protein 2 (Clasp2), found in Rattus norvegicus (Rat).